Reading from the N-terminus, the 629-residue chain is Phosphoglucomutase, chloroplastic (629 aa).

A chloroplast-targeting transit peptide spans 1–69 (MSSTYARFDT…SSSSGPIIAG (69 aa)). Alpha-D-glucose 1,6-bisphosphate contacts are provided by Arg-94 and Ser-187. Catalysis depends on Ser-187, which acts as the Phosphoserine intermediate. Mg(2+) contacts are provided by Ser-187, Asp-352, Asp-354, and Asp-356. Ser-187 is modified (phosphoserine). Residues Asp-356, Arg-357, Thr-420, Glu-439, Ser-441, and Lys-452 each coordinate alpha-D-glucose 1,6-bisphosphate.

It belongs to the phosphohexose mutase family. Monomer. It depends on Mg(2+) as a cofactor.

It localises to the plastid. The protein localises to the chloroplast. It carries out the reaction alpha-D-glucose 1-phosphate = alpha-D-glucose 6-phosphate. The enzyme catalyses O-phospho-L-seryl-[protein] + alpha-D-glucose 1-phosphate = alpha-D-glucose 1,6-bisphosphate + L-seryl-[protein]. It catalyses the reaction alpha-D-glucose 1,6-bisphosphate + L-seryl-[protein] = O-phospho-L-seryl-[protein] + alpha-D-glucose 6-phosphate. With respect to regulation, inhibited by the Calvin cycle intermediates fructose-1,6-bisphosphate and ribulose-1,5-bisphosphate. Functionally, catalyzes the reversible isomerization of alpha-D-glucose 1-phosphate to alpha-D-glucose 6-phosphate. The mechanism proceeds via the intermediate compound alpha-D-glucose 1,6-bisphosphate. This enzyme participates in both the breakdown and synthesis of glucose. The polypeptide is Phosphoglucomutase, chloroplastic (PGMP) (Brassica napus (Rape)).